The primary structure comprises 878 residues: Probable glucan endo-1,3-beta-glucosidase ARB_02077 (878 aa).

The N-terminal stretch at 1 to 27 is a signal peptide; the sequence is MARGLVSSLLLGQLLLVLVGLFSPAGA. N-linked (GlcNAc...) asparagine glycans are attached at residues N228, N257, N290, and N297. Residues 373–472 form a disordered region; the sequence is AGSGSKAKRL…TACPSAPVTK (100 aa). Residues 400 to 416 are compositionally biased toward pro residues; it reads APAPQPPAQSTAPPYPI. A compositionally biased stretch (low complexity) spans 433 to 452; the sequence is VPTRVPTGGVPSGTTGTAPS. N-linked (GlcNAc...) asparagine glycosylation is found at N505, N659, N795, and N862.

It belongs to the glycosyl hydrolase 55 family.

It localises to the secreted. The catalysed reaction is Hydrolysis of (1-&gt;3)-beta-D-glucosidic linkages in (1-&gt;3)-beta-D-glucans.. Probable glucan endo-1,3-beta-glucosidase involved in the hydrolysis of fungal cell wall. Classified as a small-oligosaccharide-producing type based its the end products: glucose, laminaribiose or laminaritetraose. The sequence is that of Probable glucan endo-1,3-beta-glucosidase ARB_02077 from Arthroderma benhamiae (strain ATCC MYA-4681 / CBS 112371) (Trichophyton mentagrophytes).